A 578-amino-acid polypeptide reads, in one-letter code: Arginine--tRNA ligase (578 aa).

Residues 127–137 (PNLAKEMHVGH) carry the 'HIGH' region motif.

It belongs to the class-I aminoacyl-tRNA synthetase family. As to quaternary structure, monomer.

It localises to the cytoplasm. It catalyses the reaction tRNA(Arg) + L-arginine + ATP = L-arginyl-tRNA(Arg) + AMP + diphosphate. The sequence is that of Arginine--tRNA ligase from Pseudomonas putida (strain ATCC 47054 / DSM 6125 / CFBP 8728 / NCIMB 11950 / KT2440).